A 419-amino-acid chain; its full sequence is Arginine biosynthesis bifunctional protein ArgJ (419 aa).

Positions 154, 180, 191, 277, 414, and 419 each coordinate substrate. Thr-191 (nucleophile) is an active-site residue.

It belongs to the ArgJ family. As to quaternary structure, heterotetramer of two alpha and two beta chains.

The protein localises to the cytoplasm. The catalysed reaction is N(2)-acetyl-L-ornithine + L-glutamate = N-acetyl-L-glutamate + L-ornithine. It carries out the reaction L-glutamate + acetyl-CoA = N-acetyl-L-glutamate + CoA + H(+). The protein operates within amino-acid biosynthesis; L-arginine biosynthesis; L-ornithine and N-acetyl-L-glutamate from L-glutamate and N(2)-acetyl-L-ornithine (cyclic): step 1/1. It participates in amino-acid biosynthesis; L-arginine biosynthesis; N(2)-acetyl-L-ornithine from L-glutamate: step 1/4. Functionally, catalyzes two activities which are involved in the cyclic version of arginine biosynthesis: the synthesis of N-acetylglutamate from glutamate and acetyl-CoA as the acetyl donor, and of ornithine by transacetylation between N(2)-acetylornithine and glutamate. The protein is Arginine biosynthesis bifunctional protein ArgJ of Thermosynechococcus vestitus (strain NIES-2133 / IAM M-273 / BP-1).